An 861-amino-acid polypeptide reads, in one-letter code: Probable linoleate 9S-lipoxygenase 3 (861 aa).

The PLAT domain occupies 33 to 160; sequence FTDLASSLTG…NYKSDRIFFA (128 aa). The Lipoxygenase domain maps to 163-861; sequence PYLPSDTPEL…GKGIPNSVSI (699 aa). Positions 220 to 247 are disordered; that stretch reads TLGGSAEYPYPRRGRTGRPPTRTDPKSE. Fe cation contacts are provided by histidine 522, histidine 527, histidine 713, asparagine 717, and isoleucine 861.

The protein belongs to the lipoxygenase family. Monomer. The cofactor is Fe cation. As to expression, expressed in tubers and roots. Not detected in leaves, flowers, stems, shoot tips, or axillary buds.

The protein localises to the cytoplasm. The catalysed reaction is (9Z,12Z)-octadecadienoate + O2 = (9S)-hydroperoxy-(10E,12Z)-octadecadienoate. It participates in lipid metabolism; oxylipin biosynthesis. Plant lipoxygenases may be involved in a number of diverse aspects of plant physiology including growth and development, pest resistance, and senescence or responses to wounding. Catalyzes the hydroperoxidation of lipids containing a cis,cis-1,4-pentadiene structure. This is Probable linoleate 9S-lipoxygenase 3 (LOX1.3) from Solanum tuberosum (Potato).